Here is a 181-residue protein sequence, read N- to C-terminus: Achaete-scute homolog 3 (181 aa).

The basic motif stretch occupies residues 93–106 (AFTRKRNERERQRV). Residues 93-145 (AFTRKRNERERQRVKCVNEGYAQLRHHLPEEYLEKRLSKVETLRAAIKYINYL) enclose the bHLH domain. Positions 107-145 (KCVNEGYAQLRHHLPEEYLEKRLSKVETLRAAIKYINYL) are helix-loop-helix motif.

In terms of assembly, efficient DNA binding requires dimerization with another bHLH protein. As to expression, widely expressed in fetal and adult tissues.

The protein localises to the nucleus. Its function is as follows. Transcriptional repressor. Inhibits myogenesis. Plays a role in progenitor cells which differentiate into ductal and acinar, but not myoepithelial, cell lineages in the salivary glands. Involved in the functions of the microvillar cells and Bowman's glands and probably, in a non-cell-autonomous manner, in the development or regeneration of a complete olfactory epithelium (OE). In Homo sapiens (Human), this protein is Achaete-scute homolog 3.